Here is an 857-residue protein sequence, read N- to C-terminus: Dynein regulatory complex protein 11 (857 aa).

Positions 206-235 constitute an IQ domain; the sequence is TKLAALQIQKVWRGFHQCKKTVKEREEEMV. The segment at 348–388 is disordered; the sequence is EEKLKKKKKKEDKENKGKKGKKEKKEKKEKKVSLKEKAMKD. Basic residues predominate over residues 365 to 375; sequence KKGKKEKKEKK. Positions 376–387 are enriched in basic and acidic residues; that stretch reads EKKVSLKEKAMK. Residue 598 to 605 coordinates ATP; it reads GPSGVGKK. The disordered stretch occupies residues 834-857; the sequence is SLTVGNKEKEKDKGKKGKRGKKKK. The segment covering 847–857 has biased composition (basic residues); that stretch reads GKKGKRGKKKK.

Belongs to the AAA ATPase family. DRC11 subfamily. In terms of assembly, component of the nexin-dynein regulatory complex (N-DRC).

The protein resides in the cytoplasm. It localises to the cytoskeleton. The protein localises to the flagellum axoneme. Functionally, component of the nexin-dynein regulatory complex (N-DRC), a key regulator of ciliary/flagellar motility which maintains the alignment and integrity of the distal axoneme and regulates microtubule sliding in motile axonemes. This Mus musculus (Mouse) protein is Dynein regulatory complex protein 11 (Iqca1).